The following is a 154-amino-acid chain: Aspartate carbamoyltransferase regulatory chain (154 aa).

Residues Cys-109, Cys-114, Cys-138, and Cys-141 each coordinate Zn(2+).

This sequence belongs to the PyrI family. As to quaternary structure, contains catalytic and regulatory chains. The cofactor is Zn(2+).

Functionally, involved in allosteric regulation of aspartate carbamoyltransferase. In Aeromonas hydrophila subsp. hydrophila (strain ATCC 7966 / DSM 30187 / BCRC 13018 / CCUG 14551 / JCM 1027 / KCTC 2358 / NCIMB 9240 / NCTC 8049), this protein is Aspartate carbamoyltransferase regulatory chain.